Consider the following 407-residue polypeptide: Serine hydroxymethyltransferase (407 aa).

Pyridoxal 5'-phosphate is bound by residues tyrosine 51 and 94–95 (GS). Residues leucine 117 and 121-123 (GHL) each bind (6S)-5,6,7,8-tetrahydrofolate. Pyridoxal 5'-phosphate contacts are provided by serine 172, histidine 200, and histidine 225. An N6-(pyridoxal phosphate)lysine modification is found at lysine 226. (6S)-5,6,7,8-tetrahydrofolate is bound at residue glutamate 242. Glycine 258 is a binding site for pyridoxal 5'-phosphate.

The protein belongs to the SHMT family. Homodimer. Pyridoxal 5'-phosphate serves as cofactor.

The protein localises to the cytoplasm. The enzyme catalyses (6R)-5,10-methylene-5,6,7,8-tetrahydrofolate + glycine + H2O = (6S)-5,6,7,8-tetrahydrofolate + L-serine. It functions in the pathway one-carbon metabolism; tetrahydrofolate interconversion. The protein operates within amino-acid biosynthesis; glycine biosynthesis; glycine from L-serine: step 1/1. Its function is as follows. Catalyzes the reversible interconversion of serine and glycine with tetrahydrofolate (THF) serving as the one-carbon carrier. This reaction serves as the major source of one-carbon groups required for the biosynthesis of purines, thymidylate, methionine, and other important biomolecules. Also exhibits THF-independent aldolase activity toward beta-hydroxyamino acids, producing glycine and aldehydes, via a retro-aldol mechanism. This Thermus thermophilus (strain ATCC 27634 / DSM 579 / HB8) protein is Serine hydroxymethyltransferase.